The sequence spans 965 residues: Pullulanase 1, chloroplastic (965 aa).

The N-terminal 62 residues, 1 to 62 (MALTLTPTSS…SKTSLHCLCS (62 aa)), are a transit peptide targeting the chloroplast. Asp-552 serves as the catalytic Nucleophile. Residue Glu-589 is the Proton donor of the active site.

Belongs to the glycosyl hydrolase 13 family.

It is found in the plastid. It localises to the chloroplast stroma. The enzyme catalyses Hydrolysis of (1-&gt;6)-alpha-D-glucosidic linkages in alpha- and beta-limit dextrins of amylopectin and glycogen, and in amylopectin and pullulan.. The protein operates within glycan biosynthesis; starch biosynthesis. It participates in glycan degradation; starch degradation. Involved in starch degradation and also probably in the trimming of pre-amylopectin chains during starch synthesis. The chain is Pullulanase 1, chloroplastic (PU1) from Arabidopsis thaliana (Mouse-ear cress).